The following is a 157-amino-acid chain: Small ribosomal subunit protein uS7 (157 aa).

It belongs to the universal ribosomal protein uS7 family. As to quaternary structure, part of the 30S ribosomal subunit. Contacts proteins S9 and S11.

Functionally, one of the primary rRNA binding proteins, it binds directly to 16S rRNA where it nucleates assembly of the head domain of the 30S subunit. Is located at the subunit interface close to the decoding center, probably blocks exit of the E-site tRNA. In Leptospira borgpetersenii serovar Hardjo-bovis (strain JB197), this protein is Small ribosomal subunit protein uS7.